A 1088-amino-acid polypeptide reads, in one-letter code: Serine/threonine-protein kinase LATS2 (1088 aa).

The tract at residues 24–49 (EGLKQPSKSSVQGLPAGPNSDTSLDA) is disordered. At Ser-83 the chain carries Phosphoserine; by AURKA. Positions 98–139 (EVNRQMLQELVNAGCDQEMAGRALKQTGSRSIEAALEYISKM) constitute a UBA domain. An interaction with ubiquitinated AMOTL2 region spans residues 101–141 (RQMLQELVNAGCDQEMAGRALKQTGSRSIEAALEYISKMGY). The segment covering 271 to 280 (RSPSFQSKTP) has biased composition (polar residues). The disordered stretch occupies residues 271 to 323 (RSPSFQSKTPPETGGYASLPTKGQGGPPGAGLAFPPPAAGLYVPHPHHKQAGP). At Thr-279 the chain carries Phosphothreonine. Ser-380 is subject to Phosphoserine. Disordered stretches follow at residues 383-428 (KPGL…SLPA) and 454-483 (PQTA…AAEG). Over residues 404–413 (SRTNSFNSHQ) the composition is skewed to polar residues. Residues 466–478 (VPAPAPAPAPAPA) show a composition bias toward pro residues. The PPxY motif motif lies at 515–518 (PPPY). The segment at 543 to 592 (SLRAGPNEPEGGDKSRKSAKGDKGGKDKKQIQTSPVPVRKNSRDEEKRES) is disordered. Over residues 553–572 (GGDKSRKSAKGDKGGKDKKQ) the composition is skewed to basic and acidic residues. A Phosphoserine modification is found at Ser-576. Residues 583–592 (NSRDEEKRES) are compositionally biased toward basic and acidic residues. A Protein kinase domain is found at 668–973 (FVKIKTLGIG…ADDLKAHPFF (306 aa)). ATP contacts are provided by residues 674 to 682 (LGIGAFGEV) and Lys-697. Residue Asp-791 is the Proton acceptor of the active site. In terms of domain architecture, AGC-kinase C-terminal spans 974 to 1052 (SAIDFSSDIR…RRFFDDNGYP (79 aa)). The disordered stretch occupies residues 994–1022 (SHPMDTSNFDPVDEESPWNDASEGSTKAW). Thr-1041 is modified (phosphothreonine). Residues 1056–1088 (PKPSGAEASQAESSDLESSDLVDQTEGCQPVYV) are disordered.

Belongs to the protein kinase superfamily. AGC Ser/Thr protein kinase family. As to quaternary structure, interacts with and is phosphorylated by AURKA. Binds to AR. Interacts with AJUBA during mitosis and this complex regulates organization of the spindle apparatus through recruitment of gamma-tubulin to the centrosome. Interacts (via PPxY motif) with YAP1 (via WW domains). Interacts with MOB1A and MOB1B. Interacts with LIMD1, WTIP and AJUBA. Interacts with SNAI1. Interacts with WWC1, WWC2 and WWC3 (via their WW domains). Interacts (via UBA domain) with ubiquitinated AMOTL2; the interaction promotes LATS2 phosphorylation of YAP1. Requires Mg(2+) as cofactor. Autophosphorylated and phosphorylated during M-phase and the G1/S-phase of the cell cycle. Phosphorylated and activated by STK3/MST2. Phosphorylated by MAP4Ks; in parallel to STK3/MST2 and resulting to its activation. Phosphorylation by NUAK2 may regulate its activity in phosphorylation and inactivation YAP1. In terms of tissue distribution, expressed at high levels in heart and skeletal muscle and at lower levels in all other tissues examined.

It localises to the cytoplasm. The protein resides in the cytoskeleton. The protein localises to the microtubule organizing center. It is found in the centrosome. Its subcellular location is the spindle pole. It localises to the nucleus. It catalyses the reaction L-seryl-[protein] + ATP = O-phospho-L-seryl-[protein] + ADP + H(+). It carries out the reaction L-threonyl-[protein] + ATP = O-phospho-L-threonyl-[protein] + ADP + H(+). Functionally, negative regulator of YAP1 in the Hippo signaling pathway that plays a pivotal role in organ size control and tumor suppression by restricting proliferation and promoting apoptosis. The core of this pathway is composed of a kinase cascade wherein STK3/MST2 and STK4/MST1, in complex with its regulatory protein SAV1, phosphorylates and activates LATS1/2 in complex with its regulatory protein MOB1, which in turn phosphorylates and inactivates YAP1 oncoprotein and WWTR1/TAZ. Phosphorylation of YAP1 by LATS2 inhibits its translocation into the nucleus to regulate cellular genes important for cell proliferation, cell death, and cell migration. Also phosphorylates YAP1 in response to cell contact inhibition-driven WWP1 ubiquitination of AMOTL2, which results in LATS2 activation. Acts as a tumor suppressor which plays a critical role in centrosome duplication, maintenance of mitotic fidelity and genomic stability. Negatively regulates G1/S transition by down-regulating cyclin E/CDK2 kinase activity. Negative regulator of the androgen receptor. Phosphorylates SNAI1 in the nucleus leading to its nuclear retention and stabilization, which enhances its epithelial-mesenchymal transition and tumor cell invasion/migration activities. This tumor-promoting activity is independent of its effects upon YAP1 or WWTR1/TAZ. Acts as an activator of the NLRP3 inflammasome by mediating phosphorylation of 'Ser-265' of NLRP3 following NLRP3 palmitoylation, promoting NLRP3 activation by NEK7. The sequence is that of Serine/threonine-protein kinase LATS2 from Homo sapiens (Human).